A 406-amino-acid chain; its full sequence is UPF0754 membrane protein CYB_2931 (406 aa).

2 helical membrane-spanning segments follow: residues 1–21 and 385–405; these read MAFWIYVVPPLAGLVIGYFTN and IVNLGGLLGFLVGCVQVLFLL.

The protein belongs to the UPF0754 family.

The protein resides in the cell inner membrane. This chain is UPF0754 membrane protein CYB_2931, found in Synechococcus sp. (strain JA-2-3B'a(2-13)) (Cyanobacteria bacterium Yellowstone B-Prime).